The primary structure comprises 506 residues: Maturase K (506 aa).

The protein belongs to the intron maturase 2 family. MatK subfamily.

The protein resides in the plastid. The protein localises to the chloroplast. Its function is as follows. Usually encoded in the trnK tRNA gene intron. Probably assists in splicing its own and other chloroplast group II introns. The polypeptide is Maturase K (Angiopteris evecta (Mule's foot fern)).